A 302-amino-acid chain; its full sequence is Probable proteasome inhibitor (302 aa).

The residue at position 2 (Ala2) is an N-acetylalanine. Disordered regions lie at residues 151 to 188 and 259 to 302; these read LDGK…QIHP and ARFD…SDFI. Positions 259-269 are enriched in pro residues; sequence ARFDPYGPPGV.

Belongs to the proteasome inhibitor PI31 family.

Could play an important role in control of proteasome function. Inhibits the hydrolysis of protein and peptide substrates by the 20S proteasome. The protein is Probable proteasome inhibitor of Arabidopsis thaliana (Mouse-ear cress).